The sequence spans 368 residues: 3-dehydroquinate synthase (368 aa).

NAD(+) contacts are provided by residues 71–76 (DGEAAK), 105–109 (GATTD), 129–130 (TT), Lys142, and Lys151. Positions 184, 247, and 263 each coordinate Zn(2+).

This sequence belongs to the sugar phosphate cyclases superfamily. Dehydroquinate synthase family. It depends on Co(2+) as a cofactor. Requires Zn(2+) as cofactor. The cofactor is NAD(+).

It localises to the cytoplasm. It catalyses the reaction 7-phospho-2-dehydro-3-deoxy-D-arabino-heptonate = 3-dehydroquinate + phosphate. Its pathway is metabolic intermediate biosynthesis; chorismate biosynthesis; chorismate from D-erythrose 4-phosphate and phosphoenolpyruvate: step 2/7. Catalyzes the conversion of 3-deoxy-D-arabino-heptulosonate 7-phosphate (DAHP) to dehydroquinate (DHQ). The chain is 3-dehydroquinate synthase from Thermobifida fusca (strain YX).